The primary structure comprises 122 residues: ATP synthase epsilon chain (122 aa).

The protein belongs to the ATPase epsilon chain family. As to quaternary structure, F-type ATPases have 2 components, CF(1) - the catalytic core - and CF(0) - the membrane proton channel. CF(1) has five subunits: alpha(3), beta(3), gamma(1), delta(1), epsilon(1). CF(0) has three main subunits: a, b and c.

It is found in the cell membrane. Produces ATP from ADP in the presence of a proton gradient across the membrane. This is ATP synthase epsilon chain from Rhodococcus erythropolis (strain PR4 / NBRC 100887).